Reading from the N-terminus, the 217-residue chain is MNILVADDEEMIREGIAAFLTEEGYHVIMAKDGQEVLEKFQDLPIHLMVLDLMMPRKSGFEVLKEINQKHDIPVIVLSALGDETTQSQVFDLYADDHVTKPFSLVLLVKRIKALIRRYYVIEDIWRYQDVTVDFTSYKAHYKNEEIDLKPKELLVLKCLIQHKNQVLSREQILEEISKDVADLPCDRVVDVYIRTLRKKLALDCIVTVKNVGYKISL.

Residues 2–115 form the Response regulatory domain; that stretch reads NILVADDEEM…LLVKRIKALI (114 aa). Residue D51 is modified to 4-aspartylphosphate. The segment at residues 122–217 is a DNA-binding region (ompR/PhoB-type); it reads EDIWRYQDVT…VKNVGYKISL (96 aa).

Post-translationally, phosphorylated at threonine residues by StkP; threonine phosphorylation enhances RR06 binding to DNA and may also increase expression of CbpA. May be de-phosphorylated by PhpP.

Its function is as follows. Member of the two-component regulatory system HK06/RR06 involved in regulation of target genes, including choline-binding protein CbpA. Binds to the promoter region of CbpA and directly activates transcription. The chain is Response regulator RR06 from Streptococcus pneumoniae serotype 2 (strain D39 / NCTC 7466).